The sequence spans 31 residues: GFNPCGETCWNKPTCHAPGCTCSIANICVRN.

Positions 1–31 (GFNPCGETCWNKPTCHAPGCTCSIANICVRN) form a cross-link, cyclopeptide (Gly-Asn). 3 disulfide bridges follow: C5–C20, C9–C22, and C15–C28.

This is a cyclic peptide.

In terms of biological role, probably participates in a plant defense mechanism. This Psychotria brachyceras protein is Cyclotide psybry B.